The following is a 328-amino-acid chain: D-cysteine desulfhydrase (328 aa).

Position 51 is an N6-(pyridoxal phosphate)lysine (lysine 51).

Belongs to the ACC deaminase/D-cysteine desulfhydrase family. Homodimer. The cofactor is pyridoxal 5'-phosphate.

The catalysed reaction is D-cysteine + H2O = hydrogen sulfide + pyruvate + NH4(+) + H(+). Catalyzes the alpha,beta-elimination reaction of D-cysteine and of several D-cysteine derivatives. It could be a defense mechanism against D-cysteine. This is D-cysteine desulfhydrase from Salmonella paratyphi C (strain RKS4594).